Here is a 623-residue protein sequence, read N- to C-terminus: Dynein axonemal intermediate chain 2 (623 aa).

5 WD repeats span residues 214 to 254, 261 to 302, 362 to 401, 405 to 445, and 450 to 489; these read KPLS…LVAE, SHRD…EPIE, GHHG…SSIM, YHMA…CDPA, and VCDD…STLQ. The interval 565–602 is disordered; that stretch reads AEALKKKPKPRKKSSVKVEAEEEVEENVGEEEEAGGII. Residues 570–579 show a composition bias toward basic residues; sequence KKPKPRKKSS. Positions 584 to 598 are enriched in acidic residues; that stretch reads AEEEVEENVGEEEEA.

This sequence belongs to the dynein intermediate chain family. In terms of assembly, consists of at least two heavy chains and a number of intermediate and light chains. Interacts with DNAAF2. Interacts with DNAAF6/PIH1D3. Interacts with HEATR2; probably involved in outer arm dynein assembly. Interacts with CFAP53. Predominantly expressed in ovary, testis and lung.

It is found in the cytoplasm. Its subcellular location is the cytoskeleton. The protein resides in the cilium axoneme. The protein localises to the dynein axonemal particle. In terms of biological role, part of the dynein complex of respiratory cilia. The protein is Dynein axonemal intermediate chain 2 (Dnai2) of Mus musculus (Mouse).